The following is a 397-amino-acid chain: Pentatricopeptide repeat-containing protein At1g80150, mitochondrial (397 aa).

Residues 1–81 (MLSLRHIRRF…FAFEDTVSRL (81 aa)) constitute a mitochondrion transit peptide. 8 PPR repeats span residues 105-139 (REGFIVRIIMLYGKAGMTKQALDTFFNMDLYGCKR), 140-170 (SVKSFNAALQVLSFNPDLHTIWEFLHDAPSK), 176-210 (DAVSFNIAIKSFCELGILDGAYMAMREMEKSGLTP), 211-245 (DVVTYTTLISALYKHERCVIGNGLWNLMVLKGCKP), 246-280 (NLTTFNVRIQFLVNRRRAWDANDLLLLMPKLQVEP), 281-315 (DSITYNMVIKGFFLARFPDMAERVYTAMHGKGYKP), 316-350 (NLKIYQTMIHYLCKAGNFDLAYTMCKDCMRKKWYP), and 351-381 (NLDTVEMLLKGLVKKGQLDQAKSIMELVHRR).

Belongs to the PPR family. P subfamily.

The protein resides in the mitochondrion. The polypeptide is Pentatricopeptide repeat-containing protein At1g80150, mitochondrial (Arabidopsis thaliana (Mouse-ear cress)).